Consider the following 165-residue polypeptide: Ubiquitin-conjugating enzyme E2 G2 (165 aa).

Residue alanine 2 is modified to N-acetylalanine. The region spanning 4-164 is the UBC core domain; sequence TALKRLMAEY…AKQIVQKSLG (161 aa). The active-site Glycyl thioester intermediate is the cysteine 89.

This sequence belongs to the ubiquitin-conjugating enzyme family. In terms of assembly, interacts with AUP1 (via C-terminus); the interaction recruits UBE2G2 to lipid droplets. Interacts with ubiquitin ligases AMFR/gp78 and RNF139/TRC8; recruitment to lipid droplets by AUP1 facilitates interaction of UBE2G2 with AMFR and RNF139, leading to sterol-induced ubiquitination of 3-hydroxy-3-methylglutaryl coenzyme A reductase and its subsequent proteasomal degradation.

The protein localises to the endoplasmic reticulum. Its subcellular location is the lipid droplet. It catalyses the reaction S-ubiquitinyl-[E1 ubiquitin-activating enzyme]-L-cysteine + [E2 ubiquitin-conjugating enzyme]-L-cysteine = [E1 ubiquitin-activating enzyme]-L-cysteine + S-ubiquitinyl-[E2 ubiquitin-conjugating enzyme]-L-cysteine.. It participates in protein modification; protein ubiquitination. Accepts ubiquitin from the E1 complex and catalyzes its covalent attachment to other proteins. In vitro catalyzes 'Lys-48'-linked polyubiquitination. Involved in endoplasmic reticulum-associated degradation (ERAD). Required for sterol-induced ubiquitination of 3-hydroxy-3-methylglutaryl coenzyme A reductase and its subsequent proteasomal degradation. This is Ubiquitin-conjugating enzyme E2 G2 from Bos taurus (Bovine).